The sequence spans 147 residues: Large ribosomal subunit protein bL9 (147 aa).

This sequence belongs to the bacterial ribosomal protein bL9 family.

Its function is as follows. Binds to the 23S rRNA. This is Large ribosomal subunit protein bL9 from Campylobacter fetus subsp. fetus (strain 82-40).